A 32-amino-acid polypeptide reads, in one-letter code: Toxic phospholipase A2 (32 aa).

This sequence belongs to the phospholipase A2 family. Group III subfamily. Ca(2+) is required as a cofactor.

The protein localises to the secreted. Its subcellular location is the nematocyst. The catalysed reaction is a 1,2-diacyl-sn-glycero-3-phosphocholine + H2O = a 1-acyl-sn-glycero-3-phosphocholine + a fatty acid + H(+). Its function is as follows. PLA2 catalyzes the calcium-dependent hydrolysis of the 2-acyl groups in 3-sn-phosphoglycerides. This Rhopilema nomadica (Mediteranean medusa) protein is Toxic phospholipase A2.